A 195-amino-acid chain; its full sequence is ATP-dependent Clp protease proteolytic subunit (195 aa).

Catalysis depends on serine 98, which acts as the Nucleophile. Histidine 123 is a catalytic residue.

This sequence belongs to the peptidase S14 family. As to quaternary structure, fourteen ClpP subunits assemble into 2 heptameric rings which stack back to back to give a disk-like structure with a central cavity, resembling the structure of eukaryotic proteasomes.

The protein localises to the cytoplasm. It carries out the reaction Hydrolysis of proteins to small peptides in the presence of ATP and magnesium. alpha-casein is the usual test substrate. In the absence of ATP, only oligopeptides shorter than five residues are hydrolyzed (such as succinyl-Leu-Tyr-|-NHMec, and Leu-Tyr-Leu-|-Tyr-Trp, in which cleavage of the -Tyr-|-Leu- and -Tyr-|-Trp bonds also occurs).. Its function is as follows. Cleaves peptides in various proteins in a process that requires ATP hydrolysis. Has a chymotrypsin-like activity. Plays a major role in the degradation of misfolded proteins. This Staphylococcus haemolyticus (strain JCSC1435) protein is ATP-dependent Clp protease proteolytic subunit.